We begin with the raw amino-acid sequence, 204 residues long: Putative 3-methyladenine DNA glycosylase (204 aa).

The protein belongs to the DNA glycosylase MPG family.

The chain is Putative 3-methyladenine DNA glycosylase from Mycobacterium sp. (strain KMS).